Consider the following 208-residue polypeptide: dITP/XTP pyrophosphatase (208 aa).

11 to 16 (TGNAKK) contributes to the substrate binding site. Catalysis depends on Asp73, which acts as the Proton acceptor. Mg(2+) is bound at residue Asp73. Residues Ser74, 157–160 (FGYD), Lys180, and 185–186 (HR) each bind substrate.

The protein belongs to the HAM1 NTPase family. As to quaternary structure, homodimer. It depends on Mg(2+) as a cofactor.

It carries out the reaction XTP + H2O = XMP + diphosphate + H(+). It catalyses the reaction dITP + H2O = dIMP + diphosphate + H(+). The enzyme catalyses ITP + H2O = IMP + diphosphate + H(+). In terms of biological role, pyrophosphatase that catalyzes the hydrolysis of nucleoside triphosphates to their monophosphate derivatives, with a high preference for the non-canonical purine nucleotides XTP (xanthosine triphosphate), dITP (deoxyinosine triphosphate) and ITP. Seems to function as a house-cleaning enzyme that removes non-canonical purine nucleotides from the nucleotide pool, thus preventing their incorporation into DNA/RNA and avoiding chromosomal lesions. The polypeptide is dITP/XTP pyrophosphatase (Rhodopirellula baltica (strain DSM 10527 / NCIMB 13988 / SH1)).